The sequence spans 595 residues: S-(+)-linalool synthase, chloroplastic (595 aa).

Residues Met1–Arg46 constitute a chloroplast transit peptide. Over residues Ser27–Ser40 the composition is skewed to low complexity. Residues Ser27 to Pro54 are disordered. (2E)-geranyl diphosphate contacts are provided by Arg309, Asp346, Asp350, Arg487, and Asp490. Mg(2+)-binding residues include Asp346 and Asp350. Residues Asp346–Asp350 carry the DDXXD motif motif. Mg(2+) is bound by residues Asp490, Ser494, and Glu498.

Belongs to the terpene synthase family. Tpsb subfamily. Mg(2+) serves as cofactor. The cofactor is Mn(2+).

It localises to the plastid. It is found in the chloroplast. The enzyme catalyses (2E)-geranyl diphosphate + H2O = (S)-linalool + diphosphate. It participates in secondary metabolite biosynthesis; terpenoid biosynthesis. Functionally, involved in monoterpene (C10) biosynthesis. The major product is S-(+)-linalool. Linalool production is induced by jasmonate in response to pathogen attack, it possesses antibacterial activity and is important for resistance to the bacterial blight pathogen Xanthomonas oryzae pv. oryzae (Xoo). Plants over-expressing linalool synthase display enhanced resistance to Xoo. This is S-(+)-linalool synthase, chloroplastic from Oryza sativa subsp. japonica (Rice).